A 184-amino-acid polypeptide reads, in one-letter code: Tumor necrosis factor receptor superfamily member 17 (184 aa).

Over 1 to 54 (MLQMAGQCSQNEYFDSLLHACIPCQLRCSSNTPPLTCQRYCNASVTNSVKGTNA) the chain is Extracellular. The stretch at 7 to 41 (QCSQNEYFDSLLHACIPCQLRCSSNTPPLTCQRYC) is one TNFR-Cys repeat. Intrachain disulfides connect Cys-8–Cys-21, Cys-24–Cys-37, and Cys-28–Cys-41. The helical; Signal-anchor for type III membrane protein transmembrane segment at 55-77 (ILWTCLGLSLIISLAVFVLMFLL) threads the bilayer. At 78–184 (RKINSEPLKD…TEIEKSISAR (107 aa)) the chain is on the cytoplasmic side.

In terms of assembly, associates with TRAF1, TRAF2, TRAF3, TRAF5 and TRAF6. As to expression, expressed in mature B-cells, but not in T-cells or monocytes.

It localises to the cell membrane. It is found in the endomembrane system. In terms of biological role, receptor for TNFSF13B/BLyS/BAFF and TNFSF13/APRIL. Promotes B-cell survival and plays a role in the regulation of humoral immunity. Activates NF-kappa-B and JNK. In Homo sapiens (Human), this protein is Tumor necrosis factor receptor superfamily member 17 (TNFRSF17).